The chain runs to 1460 residues: Nucleoporin NUP159 (1460 aa).

Positions 1–500 are interaction with DBP5; sequence MSSLKDEVPT…SEQDATDPAS (500 aa). An FG 1 repeat occupies 228-231; that stretch reads AVFG. The stretch at 267–270 is one PXFG 1 repeat; that stretch reads PPFG. The tract at residues 401–435 is disordered; the sequence is KSLSPTSEKIPIAGQEQEEKKKNNESSKALSENPF. The residue at position 404 (Ser-404) is a Phosphoserine. One copy of the SXFGXPXFG 1 repeat lies at 462-470; it reads STFGAPSFG. Positions 483–504 are disordered; that stretch reads STSTGVASSEQDATDPASAKPV. Positions 497 to 701 are interactions with CRM1 and GLE1; it reads DPASAKPVFG…KPNTSTKPKT (205 aa). An SXFGXPXFG 2; approximate repeat occupies 503–511; that stretch reads PVFGKPAFG. An SXFGXPXFG 3; approximate repeat occupies 522–530; that stretch reads YAFGKPSFG. The stretch at 532–535 is one PXFG 2 repeat; it reads PSFG. Positions 533 to 619 are disordered; that stretch reads SFGSGKSSVE…SAFGTASSNE (87 aa). 4 stretches are compositionally biased toward polar residues: residues 536–546, 556–567, 582–593, and 607–619; these read SGKSSVESPAS, GTPSFGSGNSSV, GTPSFGSGNSSA, and FGTS…SSNE. An SXFGXPXFG 4 repeat occupies 548–556; that stretch reads SAFGKPSFG. Residues 558-561 form a PXFG 3 repeat; it reads PSFG. Residues 574–582 form an SXFGXPXFG 5 repeat; sequence SAFGKPSFG. A PXFG 4 repeat occupies 584 to 587; that stretch reads PSFG. Residues 600-608 form an SXFGXPXFG 6 repeat; the sequence is SAFGKPSFG. One copy of the SXFG 1 repeat lies at 610–613; the sequence is SAFG. An SXFGXPXFG 7; approximate repeat occupies 624 to 632; sequence SIFGKAAFG. Residues 642–645 form an FG 2 repeat; it reads ELFG. Residues 647-704 are disordered; that stretch reads NFTISKPTVDSPKEVDSTSPFPSSGDQSEDESKSDVDSSSTPFGTKPNTSTKPKTNAF. Ser-657 bears the Phosphoserine mark. Positions 683–704 are enriched in low complexity; sequence DSSSTPFGTKPNTSTKPKTNAF. The FG 3 repeat unit spans residues 687 to 690; that stretch reads TPFG. Residues 704–707 form an FXFG 1 repeat; it reads FDFG. The stretch at 709–712 is one SXFG 2 repeat; the sequence is SSFG. Ser-724 bears the Phosphoserine mark. Polar residues-rich tracts occupy residues 727–750, 757–767, and 778–800; these read TFKF…FSSF, NGSLSKGSTSE, and NGPN…STRL. The disordered stretch occupies residues 727–824; sequence TFKFGTQASP…EAQKSPIGKL (98 aa). Residues 728–731 form an FXFG 2 repeat; the sequence is FKFG. Phosphoserine is present on residues Ser-735 and Ser-745. At Thr-803 the chain carries Phosphothreonine. The segment covering 804–814 has biased composition (acidic residues); it reads PSDEDGEVVEE. Ser-805 and Ser-819 each carry phosphoserine. The PXFG 5 repeat unit spans residues 842 to 845; sequence PVFG. Positions 861–889 are enriched in polar residues; sequence TNITKPSSTTPAFSFGNSTMNKSNTSTVS. Residues 861–1092 are disordered; it reads TNITKPSSTT…DINTDELPHG (232 aa). One copy of the FXFG 3 repeat lies at 873–876; the sequence is FSFG. Residue Ser-889 is modified to Phosphoserine. Positions 917-936 are enriched in basic and acidic residues; it reads AKEERTGESSKKDHNDDPKD. Ser-940 carries the post-translational modification Phosphoserine. A compositionally biased stretch (polar residues) spans 942–958; the sequence is SEISVRTSESAFDTTAN. Composition is skewed to basic and acidic residues over residues 960–1002, 1017–1027, 1035–1061, and 1068–1092; these read EIPK…KNNE, ALKKDNEKENF, QFED…KESD, and SDRD…LPHG. An interaction with DYN2 region spans residues 1086–1175; it reads TDELPHGGEA…TCNFSVQTFE (90 aa). Positions 1223-1460 are interaction with NUP82; it reads AEFTVLMENI…DFFKNLNMAK (238 aa). Coiled coils occupy residues 1279–1320 and 1383–1418; these read EQMQ…YLFL and AKLA…GKKA.

Component of the nuclear pore complex (NPC). NPC constitutes the exclusive means of nucleocytoplasmic transport. NPCs allow the passive diffusion of ions and small molecules and the active, nuclear transport receptor-mediated bidirectional transport of macromolecules such as proteins, RNAs, ribonucleoparticles (RNPs), and ribosomal subunits across the nuclear envelope. Due to its 8-fold rotational symmetry, all subunits are present with 8 copies or multiples thereof. Part of the NUP82 subcomplex, interacts with NUP82 through its C-terminal coiled coil. This subcomplex is the base for interactions with NUP116 and GLE2, with NUP42 and GLE1 and with DYN2. Interacts directly with DYN2. Interacts through its FG repeats with karyopherins, such as heterodimeric mRNA transport factor MEX67/MTR2, CRM1 (XPO1), and PSE1 (GSP1-GDP dependent). Interaction with CRM1 (XPO1) is GSP1-GTP dependent and stimulated by RNA1. NUP159 also interacts with GLE1 and the ATP-dependent RNA helicase DBP5.

It localises to the nucleus. It is found in the nuclear pore complex. The protein resides in the nucleus membrane. Its function is as follows. Functions as a component of the nuclear pore complex (NPC). NPC components, collectively referred to as nucleoporins (NUPs), can play the role of both NPC structural components and of docking or interaction partners for transiently associated nuclear transport factors. Active directional transport is assured by both, a Phe-Gly (FG) repeat affinity gradient for these transport factors across the NPC and a transport cofactor concentration gradient across the nuclear envelope (GSP1 and GSP2 GTPases associated predominantly with GTP in the nucleus, with GDP in the cytoplasm). NUP159 plays an important role in several nuclear export pathways including poly(A)+ RNA, pre-ribosome, and protein export. The chain is Nucleoporin NUP159 (NUP159) from Saccharomyces cerevisiae (strain ATCC 204508 / S288c) (Baker's yeast).